Consider the following 139-residue polypeptide: MNIFYVIVLLSFFLSKSSGFFPVIEVRIMNRRGNGRSIGIHCRSKDNDLQNQTVTSGHDMSFSFREDFFHTTHFYCDLQWDKETKFGFYSYQAKRDDDGRCSSQCLWKIMDDGLYGFDQEHQIWQIYHLIKKERKEGRT.

A signal peptide spans 1–19 (MNIFYVIVLLSFFLSKSSG). N-linked (GlcNAc...) asparagine glycosylation is present at asparagine 51.

This sequence belongs to the plant self-incompatibility (S1) protein family. Post-translationally, glycosylated (S1b) and unglocosylated (S1a) forms coexist. In terms of tissue distribution, accumulates in the stigma (at protein level).

It localises to the secreted. Its function is as follows. Exhibits specific pollen self-inhibitory activity thus preventing self-fertilization. The protein is Self-incompatibility protein S1 of Papaver rhoeas (Common poppy).